Reading from the N-terminus, the 145-residue chain is Putative pre-16S rRNA nuclease (145 aa).

The protein belongs to the YqgF nuclease family.

It is found in the cytoplasm. Functionally, could be a nuclease involved in processing of the 5'-end of pre-16S rRNA. This chain is Putative pre-16S rRNA nuclease, found in Thiobacillus denitrificans (strain ATCC 25259 / T1).